Consider the following 851-residue polypeptide: mRNA-capping enzyme catalytic subunit (851 aa).

The interval 1–544 (MDKYISKTPL…EEEKLADIAA (544 aa)) is triphosphatase-guanylyltransferase. Residues Glu-38, Glu-40, Glu-199, and Glu-201 each coordinate Mg(2+). Lys-266 acts as the N6-GMP-lysine intermediate in catalysis. 554 to 555 (LN) provides a ligand contact to S-adenosyl-L-methionine. In terms of domain architecture, mRNA cap 0 methyltransferase spans 565 to 850 (RVRGALGILS…HYMVYVFSKE (286 aa)). An mRNA-binding site is contributed by 574 to 575 (SN). Residues Lys-578, Asp-603, Asp-625, and 683–685 (QFA) contribute to the S-adenosyl-L-methionine site.

It in the N-terminal section; belongs to the dsDNA virus mRNA guanylyltransferase family. This sequence in the C-terminal section; belongs to the class I-like SAM-binding methyltransferase superfamily. mRNA cap 0 methyltransferase family. In terms of assembly, heterodimer of a catalytic and a regulatory subunit. Intrinsic methyltransferase activity of the catalytic subunit is weak and needs to be stimulated 30- to 50-fold by the regulatory subunit, which is itself catalytically inert. Requires Mg(2+) as cofactor.

It is found in the virion. The catalysed reaction is a 5'-end triphospho-ribonucleoside in mRNA + H2O = a 5'-end diphospho-ribonucleoside in mRNA + phosphate + H(+). It catalyses the reaction a 5'-end diphospho-ribonucleoside in mRNA + GTP + H(+) = a 5'-end (5'-triphosphoguanosine)-ribonucleoside in mRNA + diphosphate. The enzyme catalyses a 5'-end (5'-triphosphoguanosine)-ribonucleoside in mRNA + S-adenosyl-L-methionine = a 5'-end (N(7)-methyl 5'-triphosphoguanosine)-ribonucleoside in mRNA + S-adenosyl-L-homocysteine. Functionally, catalytic subunit of the mRNA capping enzyme which catalyzes three enzymatic reactions: the 5' triphosphate end of the pre-mRNA is hydrolyzed to a diphosphate by RNA 5' triphosphatase; the diphosphate RNA end is capped with GMP by RNA guanylyltransferase and the GpppN cap is methylated by RNA (guanine-N7) methyltransferase. Heterodimeric mRNA capping enzyme catalyzes the linkage of a N7-methyl-guanosine moiety to the first transcribed nucleotide (cap 0 structure), whereas the polymerase associated VP39 is responsible for a second methylation at the 2'-O position of the ribose (cap 1 structure). The heterodimeric enzyme is also involved in early viral gene transcription termination and intermediate viral gene transcription initiation. Early gene transcription termination requires the termination factor VTF, the DNA-dependent ATPase NPH-I and the Rap94 subunit of the viral RNA polymerase, as well as the presence of a specific termination motif. Binds, together with RAP94, to the termination motif 5'-UUUUUNU-3' in the nascent early mRNA. The polypeptide is mRNA-capping enzyme catalytic subunit (Fowlpox virus (strain NVSL) (FPV)).